We begin with the raw amino-acid sequence, 932 residues long: RNA-binding protein 12 (932 aa).

The interval 97 to 116 (IPPANASRSGPPPSSGMSGR) is disordered. Over residues 98–116 (PPANASRSGPPPSSGMSGR) the composition is skewed to low complexity. The RRM 1 domain occupies 304 to 379 (LYVSVHGMPF…RYVEVSPATE (76 aa)). Phosphoserine occurs at positions 352 and 375. Residues 393–424 (QNMGPSGQSHPPPQTLPRSKSPSGQKRSRSRS) form a disordered region. Residues 408-417 (LPRSKSPSGQ) are compositionally biased toward polar residues. 3 positions are modified to phosphoserine: Ser-420, Ser-422, and Ser-424. The RRM 2 domain occupies 430–507 (FCVYLKGLPF…RFIQVHPITK (78 aa)). A Phosphoserine modification is found at Ser-525. Residues 717 to 734 (NGPPFNFPGNFGGSNAFG) are compositionally biased toward low complexity. The disordered stretch occupies residues 717 to 853 (NGPPFNFPGN…PGFASSSGKP (137 aa)). A compositionally biased stretch (gly residues) spans 783–811 (SGFGGGPQNFGNGPGSLGGPPGFGSGPPG). Over residues 824–836 (AFGPGPGPGPGPG) the composition is skewed to pro residues. The RRM 3 domain occupies 856-932 (TVIKVQNMPF…GSRKVKLVLG (77 aa)).

The protein resides in the nucleus. In Macaca mulatta (Rhesus macaque), this protein is RNA-binding protein 12 (RBM12).